Here is a 183-residue protein sequence, read N- to C-terminus: Bifunctional protein PyrR (183 aa).

The short motif at valine 98–threonine 110 is the PRPP-binding element.

It belongs to the purine/pyrimidine phosphoribosyltransferase family. PyrR subfamily.

The catalysed reaction is UMP + diphosphate = 5-phospho-alpha-D-ribose 1-diphosphate + uracil. Regulates the transcription of the pyrimidine nucleotide (pyr) operon in response to exogenous pyrimidines. Its function is as follows. Also displays a weak uracil phosphoribosyltransferase activity which is not physiologically significant. This Roseiflexus sp. (strain RS-1) protein is Bifunctional protein PyrR.